The primary structure comprises 102 residues: Urease subunit beta (102 aa).

It belongs to the urease beta subunit family. Heterotrimer of UreA (gamma), UreB (beta) and UreC (alpha) subunits. Three heterotrimers associate to form the active enzyme.

The protein resides in the cytoplasm. The enzyme catalyses urea + 2 H2O + H(+) = hydrogencarbonate + 2 NH4(+). Its pathway is nitrogen metabolism; urea degradation; CO(2) and NH(3) from urea (urease route): step 1/1. The protein is Urease subunit beta of Pseudomonas savastanoi pv. phaseolicola (strain 1448A / Race 6) (Pseudomonas syringae pv. phaseolicola (strain 1448A / Race 6)).